Here is a 484-residue protein sequence, read N- to C-terminus: Glycogen synthase (484 aa).

Residue K20 participates in ADP-alpha-D-glucose binding.

This sequence belongs to the glycosyltransferase 1 family. Bacterial/plant glycogen synthase subfamily.

The catalysed reaction is [(1-&gt;4)-alpha-D-glucosyl](n) + ADP-alpha-D-glucose = [(1-&gt;4)-alpha-D-glucosyl](n+1) + ADP + H(+). The protein operates within glycan biosynthesis; glycogen biosynthesis. In terms of biological role, synthesizes alpha-1,4-glucan chains using ADP-glucose. This is Glycogen synthase from Vibrio atlanticus (strain LGP32) (Vibrio splendidus (strain Mel32)).